The chain runs to 135 residues: Holo-[acyl-carrier-protein] synthase (135 aa).

Residues aspartate 8 and glutamate 58 each coordinate Mg(2+).

The protein belongs to the P-Pant transferase superfamily. AcpS family. The cofactor is Mg(2+).

It is found in the cytoplasm. The catalysed reaction is apo-[ACP] + CoA = holo-[ACP] + adenosine 3',5'-bisphosphate + H(+). Functionally, transfers the 4'-phosphopantetheine moiety from coenzyme A to a Ser of acyl-carrier-protein. This chain is Holo-[acyl-carrier-protein] synthase, found in Ligilactobacillus salivarius (strain UCC118) (Lactobacillus salivarius).